The following is a 121-amino-acid chain: Large ribosomal subunit protein bL12 (121 aa).

Belongs to the bacterial ribosomal protein bL12 family. Homodimer. Part of the ribosomal stalk of the 50S ribosomal subunit. Forms a multimeric L10(L12)X complex, where L10 forms an elongated spine to which 2 to 4 L12 dimers bind in a sequential fashion. Binds GTP-bound translation factors.

Its function is as follows. Forms part of the ribosomal stalk which helps the ribosome interact with GTP-bound translation factors. Is thus essential for accurate translation. The chain is Large ribosomal subunit protein bL12 from Shewanella halifaxensis (strain HAW-EB4).